We begin with the raw amino-acid sequence, 586 residues long: Ezrin (586 aa).

The region spanning Pro2–Arg295 is the FERM domain. An N6-acetyllysine modification is found at Lys60. The [IL]-x-C-x-x-[DE] motif motif lies at Ile115–Glu120. Tyr146 is modified (phosphotyrosine; by PDGFR). The tract at residues Glu244–Met586 is interaction with SCYL3. Positions Val302 to Glu462 form a coiled coil. Positions Lys306–Glu338 are disordered. A compositionally biased stretch (basic and acidic residues) spans Gln308 to Glu338. Residue Ser366 is modified to Phosphoserine. Tyr478 bears the Phosphotyrosine mark. Ser535 carries the phosphoserine modification. Thr567 carries the phosphothreonine; by ROCK2 and PKC/PRKCI modification.

As to quaternary structure, interacts with PODXL and NHERF2. Found in a complex with EZR, PODXL and NHERF2. Interacts with PALS1. Interacts with MCC, PLEKHG6, SCYL3/PACE1, NHERF1 and TMEM8B. Interacts (when phosphorylated) with FES/FPS. Interacts with dimeric S100P, the interaction may be activating through unmasking of F-actin binding sites. Identified in complexes that contain VIM, EZR, AHNAK, BFSP1, BFSP2, ANK2, PLEC, PRX and spectrin. Detected in a complex composed of at least EZR, AHNAK, PPL and PRX. Interacts with PDPN (via cytoplasmic domain); activates RHOA and promotes epithelial-mesenchymal transition. Interacts with SPN/CD43 cytoplasmic tail, CD44 and ICAM2. Interacts with SLC9A3; interaction targets SLC9A3 to the apical membrane. Interacts with SLC9A1; regulates interactions of SLC9A1 with cytoskeletal and promotes stress fiber formation. Interacts with CLIC5; may work together in a complex which also includes RDX and MYO6 to stabilize linkages between the plasma membrane and subjacent actin cytoskeleton at the base of stereocilia. Phosphorylated by tyrosine-protein kinases. Phosphorylation by ROCK2 suppresses the head-to-tail association of the N-terminal and C-terminal halves resulting in an opened conformation which is capable of actin and membrane-binding. Post-translationally, S-nitrosylation is induced by interferon-gamma and oxidatively-modified low-densitity lipoprotein (LDL(ox)) possibly implicating the iNOS-S100A8/9 transnitrosylase complex. As to expression, glomerular epithelium cell (podocyte). Expressed in cerebrum, cerebellum and hippocampus (at protein level). Expressed in the small intestine, lung, kidney and ovaries.

The protein localises to the apical cell membrane. It is found in the cell projection. The protein resides in the microvillus membrane. It localises to the ruffle membrane. Its subcellular location is the cytoplasm. The protein localises to the cell cortex. It is found in the cytoskeleton. The protein resides in the microvillus. With respect to regulation, a head-to-tail association, of the N-terminal and C-terminal halves results in a closed conformation (inactive form) which is incapable of actin or membrane-binding. Probably involved in connections of major cytoskeletal structures to the plasma membrane. In epithelial cells, required for the formation of microvilli and membrane ruffles on the apical pole. Along with PLEKHG6, required for normal macropinocytosis. The polypeptide is Ezrin (Ezr) (Rattus norvegicus (Rat)).